The sequence spans 713 residues: Cytosolic endo-beta-N-acetylglucosaminidase (713 aa).

A disordered region spans residues 1 to 36 (MIARKRKSNGSETTSGKIPKDDVSSESCLDQPADES). The BRCT domain maps to 270-362 (FFDACDGFFT…DFRQNQDKFW (93 aa)).

This sequence belongs to the glycosyl hydrolase 85 family.

The protein resides in the cytoplasm. The protein localises to the cytosol. The catalysed reaction is an N(4)-(oligosaccharide-(1-&gt;3)-[oligosaccharide-(1-&gt;6)]-beta-D-Man-(1-&gt;4)-beta-D-GlcNAc-(1-&gt;4)-alpha-D-GlcNAc)-L-asparaginyl-[protein] + H2O = an oligosaccharide-(1-&gt;3)-[oligosaccharide-(1-&gt;6)]-beta-D-Man-(1-&gt;4)-D-GlcNAc + N(4)-(N-acetyl-beta-D-glucosaminyl)-L-asparaginyl-[protein]. Its function is as follows. Endoglycosidase that releases N-glycans from glycoproteins by cleaving the beta-1,4-glycosidic bond in the N,N'-diacetylchitobiose core. Involved in the processing of free oligosaccharides in the cytosol. The chain is Cytosolic endo-beta-N-acetylglucosaminidase (engase) from Danio rerio (Zebrafish).